We begin with the raw amino-acid sequence, 522 residues long: Maturase K (522 aa).

This sequence belongs to the intron maturase 2 family. MatK subfamily.

It is found in the plastid. Its subcellular location is the chloroplast. Usually encoded in the trnK tRNA gene intron. Probably assists in splicing its own and other chloroplast group II introns. This is Maturase K from Aristea glauca.